A 438-amino-acid chain; its full sequence is Thymidine phosphorylase (438 aa).

Belongs to the thymidine/pyrimidine-nucleoside phosphorylase family. In terms of assembly, homodimer.

The catalysed reaction is thymidine + phosphate = 2-deoxy-alpha-D-ribose 1-phosphate + thymine. The protein operates within pyrimidine metabolism; dTMP biosynthesis via salvage pathway; dTMP from thymine: step 1/2. Its function is as follows. The enzymes which catalyze the reversible phosphorolysis of pyrimidine nucleosides are involved in the degradation of these compounds and in their utilization as carbon and energy sources, or in the rescue of pyrimidine bases for nucleotide synthesis. This Sinorhizobium medicae (strain WSM419) (Ensifer medicae) protein is Thymidine phosphorylase.